We begin with the raw amino-acid sequence, 427 residues long: ATP-dependent RNA helicase DDX39A (427 aa).

Positions Met-1–Pro-19 are enriched in acidic residues. The interval Met-1–Ile-34 is disordered. N-acetylalanine is present on Ala-2. A Glycyl lysine isopeptide (Lys-Gly) (interchain with G-Cter in SUMO2) cross-link involves residue Lys-31. N6-acetyllysine; alternate is present on Lys-35. A Glycyl lysine isopeptide (Lys-Gly) (interchain with G-Cter in SUMO2); alternate cross-link involves residue Lys-35. At Ser-37 the chain carries Phosphoserine. Positions Ser-44–His-72 match the Q motif motif. Positions Ile-75–Val-248 constitute a Helicase ATP-binding domain. Ala-88–Thr-95 serves as a coordination point for ATP. Residues Lys-154 and Lys-162 each participate in a glycyl lysine isopeptide (Lys-Gly) (interchain with G-Cter in SUMO2) cross-link. Phosphothreonine is present on Thr-171. The DECD box motif lies at Asp-195 to Asp-198. Glycyl lysine isopeptide (Lys-Gly) (interchain with G-Cter in SUMO2) cross-links involve residues Lys-240 and Lys-255. The Helicase C-terminal domain maps to Gly-260–Thr-421. Ser-426 carries the post-translational modification Phosphoserine.

This sequence belongs to the DEAD box helicase family. DECD subfamily. In terms of assembly, binds ALYREF/THOC4 and DDX39B/BAT1. Interacts with the apo-AREX complex component SARNP. Interacts with MX1. Interacts with MCM3AP isoform GANP. Interacts with ECD. Interacts with PHAX; this interaction stimulates PHAX RNA binding activity. (Microbial infection) Interacts with human cytomegalovirus/HHV-5 protein UL69. In terms of processing, SUMOylated by RANBP2; SUMOylation modification affects its ability to bind RNA. As to expression, detected in testis, and at lower levels in brain, kidney, lung, thymus, spleen and salivary gland.

The protein localises to the nucleus. It localises to the cytoplasm. The catalysed reaction is ATP + H2O = ADP + phosphate + H(+). In terms of biological role, helicase that plays an essential role in mRNA export and is involved in multiple steps in RNA metabolism including alternative splicing. Regulates nuclear mRNA export to the cytoplasm through association with ECD. Also involved in spliceosomal uridine-rich small nuclear RNA (U snRNA) export by stimulating the RNA binding of adapter PHAX. Plays a role in the negative regulation of type I IFN production by increasing the nuclear retention of antiviral transcripts and thus reducing their protein expression. Independently of the interferon pathway, plays an antiviral role against alphaviruses by binding to a 5' conserved sequence element in the viral genomic RNA. This is ATP-dependent RNA helicase DDX39A (DDX39A) from Homo sapiens (Human).